The following is a 192-amino-acid chain: Phosphoheptose isomerase (192 aa).

In terms of domain architecture, SIS spans 35–192 (LIETLENQGK…CIERHFAHKN (158 aa)). A substrate-binding site is contributed by 50–52 (NGG). H59 and E63 together coordinate Zn(2+). Substrate contacts are provided by residues E63, 92 to 93 (ND), 118 to 120 (STS), S123, and Q170. The Zn(2+) site is built by Q170 and H178.

It belongs to the SIS family. GmhA subfamily. Homotetramer. Requires Zn(2+) as cofactor.

It localises to the cytoplasm. It catalyses the reaction 2 D-sedoheptulose 7-phosphate = D-glycero-alpha-D-manno-heptose 7-phosphate + D-glycero-beta-D-manno-heptose 7-phosphate. It participates in carbohydrate biosynthesis; D-glycero-D-manno-heptose 7-phosphate biosynthesis; D-glycero-alpha-D-manno-heptose 7-phosphate and D-glycero-beta-D-manno-heptose 7-phosphate from sedoheptulose 7-phosphate: step 1/1. Its pathway is bacterial outer membrane biogenesis; LPS core biosynthesis. In terms of biological role, catalyzes the isomerization of sedoheptulose 7-phosphate in D-glycero-D-manno-heptose 7-phosphate. The sequence is that of Phosphoheptose isomerase from Helicobacter pylori (strain ATCC 700392 / 26695) (Campylobacter pylori).